Here is a 594-residue protein sequence, read N- to C-terminus: DNA ligase 2 (594 aa).

Residue Glu250 participates in ATP binding. Residue Lys252 is the N6-AMP-lysine intermediate of the active site. Positions 257, 273, 303, 343, 419, and 425 each coordinate ATP.

The protein belongs to the ATP-dependent DNA ligase family. Mg(2+) serves as cofactor.

The catalysed reaction is ATP + (deoxyribonucleotide)n-3'-hydroxyl + 5'-phospho-(deoxyribonucleotide)m = (deoxyribonucleotide)n+m + AMP + diphosphate.. DNA ligase that seals nicks in double-stranded DNA during DNA replication, DNA recombination and DNA repair. The polypeptide is DNA ligase 2 (Korarchaeum cryptofilum (strain OPF8)).